We begin with the raw amino-acid sequence, 315 residues long: Adenine deaminase (315 aa).

The Zn(2+) site is built by H14, H16, and H194. E197 (proton donor) is an active-site residue. D275 lines the Zn(2+) pocket. Substrate is bound at residue D276.

Belongs to the metallo-dependent hydrolases superfamily. Adenosine and AMP deaminases family. Adenine deaminase type 2 subfamily. Zn(2+) is required as a cofactor.

The enzyme catalyses adenine + H2O + H(+) = hypoxanthine + NH4(+). Functionally, catalyzes the hydrolytic deamination of adenine to hypoxanthine. Plays an important role in the purine salvage pathway and in nitrogen catabolism. The protein is Adenine deaminase of Ectopseudomonas mendocina (strain ymp) (Pseudomonas mendocina).